A 401-amino-acid polypeptide reads, in one-letter code: Argininosuccinate synthase (401 aa).

8–16 (AYSGGLDTS) serves as a coordination point for ATP. Y85 is a binding site for L-citrulline. G115 provides a ligand contact to ATP. Positions 117, 121, and 122 each coordinate L-aspartate. L-citrulline is bound at residue N121. L-citrulline contacts are provided by R125, S173, E258, and Y270.

Belongs to the argininosuccinate synthase family. Type 1 subfamily. As to quaternary structure, homotetramer.

Its subcellular location is the cytoplasm. The enzyme catalyses L-citrulline + L-aspartate + ATP = 2-(N(omega)-L-arginino)succinate + AMP + diphosphate + H(+). It functions in the pathway amino-acid biosynthesis; L-arginine biosynthesis; L-arginine from L-ornithine and carbamoyl phosphate: step 2/3. The chain is Argininosuccinate synthase from Staphylococcus epidermidis (strain ATCC 35984 / DSM 28319 / BCRC 17069 / CCUG 31568 / BM 3577 / RP62A).